Consider the following 287-residue polypeptide: Aromatic amino acid exporter YddG (287 aa).

Topologically, residues 1 to 5 (MSRSS) are cytoplasmic. A helical membrane pass occupies residues 6-24 (ATLIGFTAILLWSTLALAT). One can recognise an EamA 1 domain in the interval 7 to 136 (TLIGFTAILL…MGLAGTVVLL (130 aa)). Residues 25 to 31 (SSTGAVP) are Periplasmic-facing. A helical membrane pass occupies residues 32–54 (PFLLTALTFTIGGAVGIAAGLAR). The Cytoplasmic segment spans residues 55–65 (GVGLSVLRQPW). Residues 66 to 86 (PVWVHGIGGLFGYHFFYFSAL) traverse the membrane as a helical segment. Topologically, residues 87–90 (KLAP) are periplasmic. The helical transmembrane segment at 91 to 111 (PAEAGLVAYLWPLLIVLFSAF) threads the bilayer. Residues 112–118 (LPGERLR) lie on the Cytoplasmic side of the membrane. A helical transmembrane segment spans residues 119 to 139 (PAHVAGALMGLAGTVVLLGAR). The Periplasmic portion of the chain corresponds to 140–149 (AGGFGFAPEY). A helical membrane pass occupies residues 150–170 (VPGYLAAAACAVIWSVYSVAS). The EamA 2 domain maps to 151–281 (PGYLAAAACA…ALIVGGAAVA (131 aa)). Topologically, residues 171-176 (RRFARV) are cytoplasmic. A helical transmembrane segment spans residues 177 to 198 (PTEVVAGFCLATAALSALCHIL). Over 199–208 (FEPSVWPVGS) the chain is Periplasmic. Residues 209 to 233 (EWLAVVALGIGPVGIAFYTWDIGMK) traverse the membrane as a helical segment. Topologically, residues 234–236 (RGD) are cytoplasmic. A helical membrane pass occupies residues 237 to 258 (VRLLGVLSYAAPVLSTLLLVVA). The Periplasmic segment spans residues 259 to 264 (GFAAPS). The helical transmembrane segment at 265–284 (GALAIACALIVGGAAVATLL) threads the bilayer. The Cytoplasmic segment spans residues 285 to 287 (ARR).

Belongs to the drug/metabolite transporter (DMT) superfamily. Aromatic amino acid/paraquat exporter (ArAA/P-E) (TC 2.A.7.17) family.

It localises to the cell inner membrane. It catalyses the reaction L-threonine(in) = L-threonine(out). The catalysed reaction is L-methionine(in) = L-methionine(out). The enzyme catalyses L-lysine(in) = L-lysine(out). It carries out the reaction L-glutamate(out) = L-glutamate(in). Its function is as follows. Amino acid transporter with broad substrate specificity. Can transport various amino acids, including L-threonine, L-methionine, L-lysine and L-glutamate. This is Aromatic amino acid exporter YddG from Ancylobacter novellus (strain ATCC 8093 / DSM 506 / JCM 20403 / CCM 1077 / IAM 12100 / NBRC 12443 / NCIMB 10456) (Starkeya novella).